The sequence spans 216 residues: [5-(aminomethyl)furan-3-yl]methyl phosphate kinase (216 aa).

Residues 5-9 (KIGGS), G39, D142, 147-152 (YDKFPG), and G166 each bind ATP.

The protein belongs to the MfnE family. As to quaternary structure, homotrimer. The cofactor is Mg(2+).

The enzyme catalyses [5-(aminomethyl)-3-furyl]methyl phosphate + ATP = [5-(aminomethyl)furan-3-yl]methyl diphosphate + ADP. The protein operates within cofactor biosynthesis; methanofuran biosynthesis. Inhibited by EDTA. Functionally, catalyzes the formation of 5-(aminomethyl)-3-furanmethanol diphosphate (F1-PP) from 5-(aminomethyl)-3-furanmethanol phosphate (F1-P) and ATP. In vitro, can also act as an adenylate kinase that catalyzes the transfer of a phosphoryl group from ATP to AMP, generating two molecules of ADP. The chain is [5-(aminomethyl)furan-3-yl]methyl phosphate kinase from Methanocaldococcus jannaschii (strain ATCC 43067 / DSM 2661 / JAL-1 / JCM 10045 / NBRC 100440) (Methanococcus jannaschii).